The following is a 363-amino-acid chain: MSSGPRVSVAQPRLLFAASGTGGHVFPALAVAEALPEAKIDWLGVPDRLETQLVGDRYPLHTIRVGGFQGSWLLRPLTALRLIGAIFKVRRLLKRQQIEAVFTTGGYIAGPAIAAAWSLGIPVVLHESNALPGKTTRLLSRFCRRVALGFAEAGEYLPGRPLQVVGTPLRSQFYQPSQHGLPIPENVPVLLVMGGSQGAVAINRLVRAAAPAWLAAGLWIVHLTGQQDPDRGQLQHPQYIELSFVDNVAPLLNRADFSISRAGAGSLAELAAAGLPSLLIPYPFAAEDHQTFNARIFAKAGAAILAPQSELTVEQLQQQILDLLRARLGAAIANPLPKMAAAAGKLHVADSAEQVANLLRSLL.

Residues 21–23, asparagine 129, arginine 170, serine 196, and glutamine 290 contribute to the UDP-N-acetyl-alpha-D-glucosamine site; that span reads TGG.

This sequence belongs to the glycosyltransferase 28 family. MurG subfamily.

Its subcellular location is the cell inner membrane. It carries out the reaction di-trans,octa-cis-undecaprenyl diphospho-N-acetyl-alpha-D-muramoyl-L-alanyl-D-glutamyl-meso-2,6-diaminopimeloyl-D-alanyl-D-alanine + UDP-N-acetyl-alpha-D-glucosamine = di-trans,octa-cis-undecaprenyl diphospho-[N-acetyl-alpha-D-glucosaminyl-(1-&gt;4)]-N-acetyl-alpha-D-muramoyl-L-alanyl-D-glutamyl-meso-2,6-diaminopimeloyl-D-alanyl-D-alanine + UDP + H(+). It functions in the pathway cell wall biogenesis; peptidoglycan biosynthesis. Functionally, cell wall formation. Catalyzes the transfer of a GlcNAc subunit on undecaprenyl-pyrophosphoryl-MurNAc-pentapeptide (lipid intermediate I) to form undecaprenyl-pyrophosphoryl-MurNAc-(pentapeptide)GlcNAc (lipid intermediate II). The polypeptide is UDP-N-acetylglucosamine--N-acetylmuramyl-(pentapeptide) pyrophosphoryl-undecaprenol N-acetylglucosamine transferase (Synechococcus sp. (strain ATCC 27144 / PCC 6301 / SAUG 1402/1) (Anacystis nidulans)).